The following is a 265-amino-acid chain: Cytochrome c oxidase subunit 3 (265 aa).

A run of 6 helical transmembrane segments spans residues 16–36 (PWPI…VMYM), 41–61 (GGAT…FVWW), 81–101 (GPRY…FALF), 162–182 (AVYA…FQGM), 200–220 (FFLA…FSIV), and 245–265 (WHFV…WGGI).

The protein belongs to the cytochrome c oxidase subunit 3 family. As to quaternary structure, component of the cytochrome c oxidase (complex IV, CIV), a multisubunit enzyme composed of a catalytic core of 3 subunits and several supernumerary subunits. The complex exists as a monomer or a dimer and forms supercomplexes (SCs) in the inner mitochondrial membrane with ubiquinol-cytochrome c oxidoreductase (cytochrome b-c1 complex, complex III, CIII).

It localises to the mitochondrion inner membrane. It catalyses the reaction 4 Fe(II)-[cytochrome c] + O2 + 8 H(+)(in) = 4 Fe(III)-[cytochrome c] + 2 H2O + 4 H(+)(out). In terms of biological role, component of the cytochrome c oxidase, the last enzyme in the mitochondrial electron transport chain which drives oxidative phosphorylation. The respiratory chain contains 3 multisubunit complexes succinate dehydrogenase (complex II, CII), ubiquinol-cytochrome c oxidoreductase (cytochrome b-c1 complex, complex III, CIII) and cytochrome c oxidase (complex IV, CIV), that cooperate to transfer electrons derived from NADH and succinate to molecular oxygen, creating an electrochemical gradient over the inner membrane that drives transmembrane transport and the ATP synthase. Cytochrome c oxidase is the component of the respiratory chain that catalyzes the reduction of oxygen to water. Electrons originating from reduced cytochrome c in the intermembrane space (IMS) are transferred via the dinuclear copper A center (CU(A)) of subunit 2 and heme A of subunit 1 to the active site in subunit 1, a binuclear center (BNC) formed by heme A3 and copper B (CU(B)). The BNC reduces molecular oxygen to 2 water molecules using 4 electrons from cytochrome c in the IMS and 4 protons from the mitochondrial matrix. The chain is Cytochrome c oxidase subunit 3 (COX3) from Helianthus annuus (Common sunflower).